Here is a 207-residue protein sequence, read N- to C-terminus: Putative transcriptional regulator (207 aa).

The 116-residue stretch at 3–118 (KVLIVDDHPA…ELLLAAKAVL (116 aa)) folds into the Response regulatory domain. A 4-aspartylphosphate mark is found at D9 and D53. An HTH luxR-type domain is found at 140–205 (EARMLESLSD…GLIDFARRHE (66 aa)). Positions 155–174 (LQYLANGNTNKAIAQQLFLS) form a DNA-binding region, H-T-H motif.

In terms of biological role, probable transcriptional regulator. This is Putative transcriptional regulator from Pseudomonas aeruginosa (strain ATCC 15692 / DSM 22644 / CIP 104116 / JCM 14847 / LMG 12228 / 1C / PRS 101 / PAO1).